The sequence spans 518 residues: Major facilitator superfamily domain-containing protein 8 (518 aa).

The segment at 1–20 (MAGLRNESEQEPLLGDTPGS) is disordered. Over 1-40 (MAGLRNESEQEPLLGDTPGSREWDILETEEHYKSRWRSIR) the chain is Cytoplasmic. A Dileucine internalization motif motif is present at residues 13-14 (LL). The helical transmembrane segment at 41-61 (ILYLTMFLSSVGFSVVMMSIW) threads the bilayer. The Extracellular portion of the chain corresponds to 62-74 (PYLQKIDPTADTS). The chain crosses the membrane as a helical span at residues 75-95 (FLGWVIASYSLGQMVASPIFG). Residues 96-105 (LWSNYRPRKE) are Cytoplasmic-facing. The helical transmembrane segment at 106–126 (PLIVSILISVAANCLYAYLHI) threads the bilayer. The Extracellular segment spans residues 127 to 131 (PASHN). A helical transmembrane segment spans residues 132–152 (KYYMLVARGLLGIGAGNVAVV). The Cytoplasmic portion of the chain corresponds to 153–173 (RSYTAGATSLQERTSSMANIS). Residues 174–194 (MCQALGFILGPVFQTCFTFLG) traverse the membrane as a helical segment. Residues 195 to 211 (EKGVTWDVIKLQINMYT) lie on the Extracellular side of the membrane. A helical transmembrane segment spans residues 212–232 (TPVLLSAFLGILNIILILAIL). Over 233–266 (REHRVDDSGRQCKSINFEEASTDEAQVPQGNIDQ) the chain is Cytoplasmic. A helical membrane pass occupies residues 267–287 (VAVVAINVLFFVTLFIFALFE). Over 288–304 (TIITPLTMDMYAWTQEQ) the chain is Extracellular. Residues 305–325 (AVLYNGIILAALGVEAVVIFL) form a helical membrane-spanning segment. Topologically, residues 326–337 (GVKLLSKKIGER) are cytoplasmic. The helical transmembrane segment at 338-358 (AILLGGLIVVWVGFFILLPWG) threads the bilayer. The Extracellular portion of the chain corresponds to 359 to 412 (NQFPKIQWEDLHNNSIPNTTFGEIIIGLWKSPMEDDNERPTGCSIEQAWCLYTP). N371 and N376 each carry an N-linked (GlcNAc...) asparagine glycan. The chain crosses the membrane as a helical span at residues 413 to 433 (VIHLAQFLTSAVLIGLGYPVC). At 434–451 (NLMSYTLYSKILGPKPQG) the chain is on the cytoplasmic side. Residues 452–472 (VYMGWLTASGSGARILGPMFI) form a helical membrane-spanning segment. Residues 473 to 482 (SQVYAHWGPR) are Extracellular-facing. The helical transmembrane segment at 483-503 (WAFSLVCGIIVLTITLLGVVY) threads the bilayer. At 504 to 518 (KRLIALSVRYGRIQE) the chain is on the cytoplasmic side.

Belongs to the major facilitator superfamily. In terms of tissue distribution, expressed at very low levels in all tissues tested.

It localises to the endosome membrane. The protein resides in the lysosome membrane. It catalyses the reaction chloride(in) = chloride(out). The catalysed reaction is iodide(out) = iodide(in). It carries out the reaction fluoride(in) = fluoride(out). Inhibited by chloride channel blockers 4,4'-diisothiocyano-2,2'-stilbenedisulfonate (DIDS), niflumic acid (NFA), and 5-Nitro-2-(3-phenylpropylamino) benzoic acid (NPPB). Functionally, outward-rectifying chloride channel involved in endolysosomal chloride homeostasis, membrane fusion and function. Conducts chloride currents up to hundreds of picoamperes. Regulates lysosomal calcium content by reducing the lysosomal membrane potential, thereby activating TRPML1 channel and further release of lysosomal calcium ions. Regulates the pH in endolysosomal compartments and may contribute to progressive acidification from endosome to lysosome. Permeable to other halides such as iodide and fluoride ions. This is Major facilitator superfamily domain-containing protein 8 from Homo sapiens (Human).